The following is a 362-amino-acid chain: 3-dehydroquinate synthase (362 aa).

NAD(+) contacts are provided by residues 71-76 (DGEQYK), 105-109 (GVVGD), 129-130 (TT), lysine 142, lysine 151, and 169-172 (CLKT). Zn(2+) contacts are provided by glutamate 184, histidine 247, and histidine 264.

This sequence belongs to the sugar phosphate cyclases superfamily. Dehydroquinate synthase family. It depends on Co(2+) as a cofactor. The cofactor is Zn(2+). NAD(+) is required as a cofactor.

The protein resides in the cytoplasm. It carries out the reaction 7-phospho-2-dehydro-3-deoxy-D-arabino-heptonate = 3-dehydroquinate + phosphate. Its pathway is metabolic intermediate biosynthesis; chorismate biosynthesis; chorismate from D-erythrose 4-phosphate and phosphoenolpyruvate: step 2/7. Catalyzes the conversion of 3-deoxy-D-arabino-heptulosonate 7-phosphate (DAHP) to dehydroquinate (DHQ). This chain is 3-dehydroquinate synthase, found in Escherichia coli (strain 55989 / EAEC).